An 85-amino-acid polypeptide reads, in one-letter code: Putative regulatory protein Dtur_1444 (85 aa).

It belongs to the RemA family.

The chain is Putative regulatory protein Dtur_1444 from Dictyoglomus turgidum (strain DSM 6724 / Z-1310).